We begin with the raw amino-acid sequence, 805 residues long: Hypoxia-inducible factor 1-alpha (805 aa).

The tract at residues 1–26 (MEGSVVVSEKKRISSERRKEKSRDAA) is disordered. The segment covering 8-26 (SEKKRISSERRKEKSRDAA) has biased composition (basic and acidic residues). The bHLH domain occupies 17–70 (RRKEKSRDAARCRRSNESEVFYELSHELPLPHNVSSHLDKASIMRLDHQLPAVE). 2 consecutive PAS domains span residues 85–157 (DKQL…PAKK) and 229–300 (PHPS…TKGQ). In terms of domain architecture, PAC spans 303–346 (TGQYRMLAKKGGYVWVETQATVIYNSKNSQPQCIVCVNYVLSEV). A 4-hydroxyproline mark is found at Pro404 and Pro560. The disordered stretch occupies residues 628-669 (KESTSAPVSPYNGNRSRTSSPVRPAKAVVDKTEKSRPGTPNL). Polar residues predominate over residues 629-648 (ESTSAPVSPYNGNRSRTSSP). Asn782 carries the post-translational modification (3S)-3-hydroxyasparagine.

Efficient DNA binding requires heterodimerization of an alpha and a beta/ARNT subunit. In normoxia, is hydroxylated on Pro-404 and Pro-560. The hydroxylated prolines promote interaction with VHL, initiating rapid ubiquitination and subsequent proteasomal degradation. Under hypoxia, proline hydroxylation is impaired and ubiquitination is attenuated, resulting in stabilization. In terms of processing, in normoxia, is hydroxylated on Asn-782, thus abrogating interaction with CREBBP and EP300 and preventing transcriptional activation. Post-translationally, the iron and 2-oxoglutarate dependent 3-hydroxylation of asparagine is (S) stereospecific within HIF CTAD domains.

It localises to the cytoplasm. The protein localises to the nucleus. Its subcellular location is the nucleus speckle. With respect to regulation, induced by reactive oxygen species (ROS). Its function is as follows. Functions as a master transcriptional regulator of the adaptive response to hypoxia. Under hypoxic conditions, activates the transcription of over 40 genes, including erythropoietin, glucose transporters, glycolytic enzymes, vascular endothelial growth factor, HILPDA, and other genes whose protein products increase oxygen delivery or facilitate metabolic adaptation to hypoxia. Plays an essential role in embryonic vascularization, tumor angiogenesis and pathophysiology of ischemic disease. The protein is Hypoxia-inducible factor 1-alpha (hif1a) of Xenopus laevis (African clawed frog).